We begin with the raw amino-acid sequence, 351 residues long: Tetraacyldisaccharide 4'-kinase (351 aa).

Residue 47 to 54 participates in ATP binding; that stretch reads KAGGTGKT.

The protein belongs to the LpxK family.

The enzyme catalyses a lipid A disaccharide + ATP = a lipid IVA + ADP + H(+). It functions in the pathway glycolipid biosynthesis; lipid IV(A) biosynthesis; lipid IV(A) from (3R)-3-hydroxytetradecanoyl-[acyl-carrier-protein] and UDP-N-acetyl-alpha-D-glucosamine: step 6/6. Its function is as follows. Transfers the gamma-phosphate of ATP to the 4'-position of a tetraacyldisaccharide 1-phosphate intermediate (termed DS-1-P) to form tetraacyldisaccharide 1,4'-bis-phosphate (lipid IVA). This is Tetraacyldisaccharide 4'-kinase from Cytophaga hutchinsonii (strain ATCC 33406 / DSM 1761 / CIP 103989 / NBRC 15051 / NCIMB 9469 / D465).